Here is a 461-residue protein sequence, read N- to C-terminus: General transcription and DNA repair factor IIH subunit SSL1 (461 aa).

The interval 1-70 is disordered; that stretch reads MAPVVISESE…RLSNRNLQGS (70 aa). A compositionally biased stretch (basic and acidic residues) spans 26–37; sequence VHFDGEGDDRVD. Positions 53–63 are enriched in basic residues; that stretch reads HVQRKKKKRLS. The 180-residue stretch at 125–304 folds into the VWFA domain; it reads SLILTLDCSE…THLKELFNEA (180 aa). The C4-type zinc finger occupies 349–366; that stretch reads CPNCHSKVCSLPTVCPCC.

The protein belongs to the GTF2H2 family. As to quaternary structure, component of the 7-subunit TFIIH core complex composed of XPB/SSL2, XPD/RAD3, SSL1, TFB1, TFB2, TFB4 and TFB5, which is active in NER. The core complex associates with the 3-subunit CTD-kinase module TFIIK composed of CCL1, KIN28 and TFB3 to form the 10-subunit holoenzyme (holo-TFIIH) active in transcription. An additionnal subunit, TFB6, plays a role in the dissociation of the SSL2 helicase from TFIIH after transcription initiation.

Its subcellular location is the nucleus. Component of the general transcription and DNA repair factor IIH (TFIIH) core complex, which is involved in general and transcription-coupled nucleotide excision repair (NER) of damaged DNA and, when complexed to TFIIK, in RNA transcription by RNA polymerase II. In NER, TFIIH acts by opening DNA around the lesion to allow the excision of the damaged oligonucleotide and its replacement by a new DNA fragment. In transcription, TFIIH has an essential role in transcription initiation. When the pre-initiation complex (PIC) has been established, TFIIH is required for promoter opening and promoter escape. Phosphorylation of the C-terminal tail (CTD) of the largest subunit of RNA polymerase II by the kinase module TFIIK controls the initiation of transcription. The chain is General transcription and DNA repair factor IIH subunit SSL1 (SSL1) from Saccharomyces cerevisiae (strain ATCC 204508 / S288c) (Baker's yeast).